Consider the following 138-residue polypeptide: Large ribosomal subunit protein uL16 (138 aa).

Basic residues predominate over residues 1-13 (MLQPKRRKYRKEQ). The segment at 1–24 (MLQPKRRKYRKEQKGRNTGKATRG) is disordered.

It belongs to the universal ribosomal protein uL16 family. In terms of assembly, part of the 50S ribosomal subunit.

In terms of biological role, binds 23S rRNA and is also seen to make contacts with the A and possibly P site tRNAs. This is Large ribosomal subunit protein uL16 from Burkholderia multivorans (strain ATCC 17616 / 249).